A 247-amino-acid polypeptide reads, in one-letter code: 2,3-bisphosphoglycerate-dependent phosphoglycerate mutase (247 aa).

Substrate is bound by residues 8 to 15 (RHGESQWN), 21 to 22 (TG), arginine 60, 87 to 90 (ERHY), lysine 98, 114 to 115 (RR), and 183 to 184 (GN). Residue histidine 9 is the Tele-phosphohistidine intermediate of the active site. Glutamate 87 functions as the Proton donor/acceptor in the catalytic mechanism.

This sequence belongs to the phosphoglycerate mutase family. BPG-dependent PGAM subfamily.

It carries out the reaction (2R)-2-phosphoglycerate = (2R)-3-phosphoglycerate. It participates in carbohydrate degradation; glycolysis; pyruvate from D-glyceraldehyde 3-phosphate: step 3/5. Functionally, catalyzes the interconversion of 2-phosphoglycerate and 3-phosphoglycerate. The polypeptide is 2,3-bisphosphoglycerate-dependent phosphoglycerate mutase (Chlorobium phaeovibrioides (strain DSM 265 / 1930) (Prosthecochloris vibrioformis (strain DSM 265))).